A 256-amino-acid chain; its full sequence is MADWSAEQYLKFEDERTRPARDLLAQVWLDDPRRVVDIGCGPGNSTELLVKRWPQAKVTGVDNSADMLRQARERLPGHNFIEANIAHWVAPVGTEVVFANAVFQWVPNHLKHMQRLLGALAPGGVLAVQMPDNLDELSHILMREVAFQEPWREQLSTAAELRDTLPKPGVYYDALRPLCSRLEIWHTVYNHALDSAAAIVEWVRGTGLRPFVDPLELPERKAYLAAYTARIAAAYPPQADGKVLLRFPRIFIVASK.

This sequence belongs to the methyltransferase superfamily. Tam family.

Its subcellular location is the cytoplasm. It catalyses the reaction trans-aconitate + S-adenosyl-L-methionine = (E)-3-(methoxycarbonyl)pent-2-enedioate + S-adenosyl-L-homocysteine. Catalyzes the S-adenosylmethionine monomethyl esterification of trans-aconitate. This chain is Trans-aconitate 2-methyltransferase, found in Rhodopseudomonas palustris (strain BisA53).